The chain runs to 228 residues: Mediator of RNA polymerase II transcription subunit 7-B (228 aa).

The protein belongs to the Mediator complex subunit 7 family. Component of the Mediator complex.

It is found in the nucleus. Component of the Mediator complex, a coactivator involved in the regulated transcription of nearly all RNA polymerase II-dependent genes. Mediator functions as a bridge to convey information from gene-specific regulatory proteins to the basal RNA polymerase II transcription machinery. Mediator is recruited to promoters by direct interactions with regulatory proteins and serves as a scaffold for the assembly of a functional preinitiation complex with RNA polymerase II and the general transcription factors. This is Mediator of RNA polymerase II transcription subunit 7-B (med7-b) from Xenopus laevis (African clawed frog).